A 689-amino-acid chain; its full sequence is DNA ligase (689 aa).

NAD(+) contacts are provided by residues 51-55 (DSEYD), 100-101 (SL), and glutamate 129. The active-site N6-AMP-lysine intermediate is lysine 131. Residues arginine 152, glutamate 189, lysine 308, and lysine 332 each coordinate NAD(+). Positions 426, 429, 444, and 450 each coordinate Zn(2+). The BRCT domain maps to 609-689 (ADEQPLKGQT…ELLALLAANS (81 aa)).

This sequence belongs to the NAD-dependent DNA ligase family. LigA subfamily. Mg(2+) is required as a cofactor. Requires Mn(2+) as cofactor.

It catalyses the reaction NAD(+) + (deoxyribonucleotide)n-3'-hydroxyl + 5'-phospho-(deoxyribonucleotide)m = (deoxyribonucleotide)n+m + AMP + beta-nicotinamide D-nucleotide.. Functionally, DNA ligase that catalyzes the formation of phosphodiester linkages between 5'-phosphoryl and 3'-hydroxyl groups in double-stranded DNA using NAD as a coenzyme and as the energy source for the reaction. It is essential for DNA replication and repair of damaged DNA. In Shewanella sp. (strain ANA-3), this protein is DNA ligase.